Here is a 177-residue protein sequence, read N- to C-terminus: O-acetyl-ADP-ribose deacetylase (177 aa).

Positions 1–175 (MKTRIHVVQG…LYERLLTQQG (175 aa)) constitute a Macro domain. Residues 11 to 12 (DI), Asn-25, 33 to 35 (GVD), and 122 to 126 (STGVY) each bind substrate. Asp-35 (proton acceptor) is an active-site residue.

This sequence belongs to the MacroD-type family. YmdB subfamily. Homodimer. Interacts with RNase III.

It catalyses the reaction 3''-O-acetyl-ADP-D-ribose + H2O = ADP-D-ribose + acetate + H(+). It carries out the reaction 2''-O-acetyl-ADP-D-ribose + H2O = ADP-D-ribose + acetate + H(+). In terms of biological role, deacetylates O-acetyl-ADP ribose to yield ADP-ribose and free acetate. Down-regulates ribonuclease 3 (RNase III) activity. Acts by interacting directly with the region of the ribonuclease that is required for dimerization/activation. This Escherichia coli O157:H7 protein is O-acetyl-ADP-ribose deacetylase.